A 251-amino-acid chain; its full sequence is GTP cyclohydrolase 1 type 2 homolog (251 aa).

The a divalent metal cation site is built by H64, H65, D102, H219, and E223.

The protein belongs to the GTP cyclohydrolase I type 2/NIF3 family. In terms of assembly, homohexamer.

This is GTP cyclohydrolase 1 type 2 homolog from Chlamydia trachomatis serovar D (strain ATCC VR-885 / DSM 19411 / UW-3/Cx).